A 421-amino-acid chain; its full sequence is Protein MucB (421 aa).

One can recognise a UmuC domain in the interval 2 to 187; that stretch reads FALIDVNGMY…LPVAEVWGVG (186 aa).

The protein belongs to the DNA polymerase type-Y family.

In terms of biological role, involved in UV protection and mutation. The chain is Protein MucB (mucB) from Salmonella typhimurium.